Reading from the N-terminus, the 131-residue chain is D-ribose pyranase (131 aa).

The active-site Proton donor is the His-20. Substrate contacts are provided by residues Asp-28, His-98, and 120-122; that span reads YSN.

The protein belongs to the RbsD / FucU family. RbsD subfamily. Homodecamer.

The protein resides in the cytoplasm. It carries out the reaction beta-D-ribopyranose = beta-D-ribofuranose. It functions in the pathway carbohydrate metabolism; D-ribose degradation; D-ribose 5-phosphate from beta-D-ribopyranose: step 1/2. In terms of biological role, catalyzes the interconversion of beta-pyran and beta-furan forms of D-ribose. This chain is D-ribose pyranase, found in Pediococcus pentosaceus (strain ATCC 25745 / CCUG 21536 / LMG 10740 / 183-1w).